The sequence spans 292 residues: Probable deoxyhypusine synthase (292 aa).

The Nucleophile role is filled by Lys267.

The protein belongs to the deoxyhypusine synthase family. NAD(+) is required as a cofactor.

The enzyme catalyses [eIF5A protein]-L-lysine + spermidine = [eIF5A protein]-deoxyhypusine + propane-1,3-diamine. It participates in protein modification; eIF5A hypusination. In terms of biological role, catalyzes the NAD-dependent oxidative cleavage of spermidine and the subsequent transfer of the butylamine moiety of spermidine to the epsilon-amino group of a specific lysine residue of the eIF-5A precursor protein to form the intermediate deoxyhypusine residue. In Pyrobaculum aerophilum (strain ATCC 51768 / DSM 7523 / JCM 9630 / CIP 104966 / NBRC 100827 / IM2), this protein is Probable deoxyhypusine synthase (dys).